We begin with the raw amino-acid sequence, 475 residues long: Probable proline--tRNA ligase, mitochondrial (475 aa).

A mitochondrion-targeting transit peptide spans 1 to 29 (MEGLLTRCRALPALATCSRQLSGYVPCRF).

The protein belongs to the class-II aminoacyl-tRNA synthetase family.

It localises to the mitochondrion matrix. The enzyme catalyses tRNA(Pro) + L-proline + ATP = L-prolyl-tRNA(Pro) + AMP + diphosphate. Mitochondrial aminoacyl-tRNA synthetase that catalyzes the specific attachment of the proline amino acid (aa) to the homologous transfer RNA (tRNA), further participating in protein synthesis. The reaction occurs in a two steps: proline is first activated by ATP to form Pro-AMP and then transferred to the acceptor end of tRNA(Pro). The polypeptide is Probable proline--tRNA ligase, mitochondrial (Homo sapiens (Human)).